Here is a 356-residue protein sequence, read N- to C-terminus: tRNA N6-adenosine threonylcarbamoyltransferase (356 aa).

Fe cation is bound by residues H115 and H119. Substrate contacts are provided by residues L138–G142, D171, G184, and N283. A Fe cation-binding site is contributed by D311.

It belongs to the KAE1 / TsaD family. It depends on Fe(2+) as a cofactor.

It is found in the cytoplasm. The enzyme catalyses L-threonylcarbamoyladenylate + adenosine(37) in tRNA = N(6)-L-threonylcarbamoyladenosine(37) in tRNA + AMP + H(+). In terms of biological role, required for the formation of a threonylcarbamoyl group on adenosine at position 37 (t(6)A37) in tRNAs that read codons beginning with adenine. Is involved in the transfer of the threonylcarbamoyl moiety of threonylcarbamoyl-AMP (TC-AMP) to the N6 group of A37, together with TsaE and TsaB. TsaD likely plays a direct catalytic role in this reaction. The chain is tRNA N6-adenosine threonylcarbamoyltransferase from Prochlorococcus marinus subsp. pastoris (strain CCMP1986 / NIES-2087 / MED4).